The sequence spans 615 residues: Crinkler effector protein 15 (615 aa).

A signal peptide spans 1–17 (MVKLVCAIVGVAGSAFP). Positions 18-54 (VDIDASQLVGDLKKAIKAENAMTFTGDAKDLQLFLAK) are LQLFLAK domain. The segment at 55 to 136 (QPVDDESGKE…NMELPSSEQI (82 aa)) is DWL domain. Positions 137-143 (HVLVVVP) match the HVLVXXP motif motif. An N-linked (GlcNAc...) asparagine glycan is attached at N531.

The protein belongs to the Crinkler effector family.

The protein localises to the secreted. The protein resides in the host nucleus. Secreted effector that elicits necrosis in host plants, a characteristic of plant innate immunity. The polypeptide is Crinkler effector protein 15 (Phytophthora infestans (Potato late blight agent)).